Reading from the N-terminus, the 229-residue chain is 2-C-methyl-D-erythritol 4-phosphate cytidylyltransferase (229 aa).

Belongs to the IspD/TarI cytidylyltransferase family. IspD subfamily. Homodimer.

The enzyme catalyses 2-C-methyl-D-erythritol 4-phosphate + CTP + H(+) = 4-CDP-2-C-methyl-D-erythritol + diphosphate. It participates in isoprenoid biosynthesis; isopentenyl diphosphate biosynthesis via DXP pathway; isopentenyl diphosphate from 1-deoxy-D-xylulose 5-phosphate: step 2/6. Its function is as follows. Catalyzes the formation of 4-diphosphocytidyl-2-C-methyl-D-erythritol from CTP and 2-C-methyl-D-erythritol 4-phosphate (MEP). The protein is 2-C-methyl-D-erythritol 4-phosphate cytidylyltransferase of Wigglesworthia glossinidia brevipalpis.